A 225-amino-acid chain; its full sequence is UPF0758 protein BB3258 (225 aa).

Residues 103–225 (ALANPDLVRR…TVSMAAQGHL (123 aa)) form the MPN domain. 3 residues coordinate Zn(2+): His174, His176, and Asp187. Positions 174-187 (HNHPGGTAAASAAD) match the JAMM motif motif.

This sequence belongs to the UPF0758 family.

This Bordetella bronchiseptica (strain ATCC BAA-588 / NCTC 13252 / RB50) (Alcaligenes bronchisepticus) protein is UPF0758 protein BB3258.